The primary structure comprises 92 residues: Small archaeal modifier protein 3 (92 aa).

Residues Lys18, Lys55, and Lys62 each participate in a glycyl lysine isopeptide (Lys-Gly) (interchain with G-Cter in SAMP3) cross-link. A Glycyl adenylate; alternate modification is found at Gly92. A Glycyl lysine isopeptide (Gly-Lys) (interchain with K-? in acceptor proteins); alternate cross-link involves residue Gly92.

Monomer. The C-terminal glycine is likely acyl-adenylated (-COAMP) by UbaA.

Functions as a protein modifier covalently attached to lysine residues of substrate proteins. The protein modification process is termed sampylation and involves the formation of an isopeptide bond between the SAMP3 C-terminal glycine carboxylate and the epsilon-amino group of lysine residues on target proteins. Seems to be able to form polymeric chains with itself at Lys-18, Lys-55 and Lys-62, similar to ubiquitin and other ubiquitin-like proteins. SAMP3 appears not to serve as a proteolytic signal in the cell to target proteins for degradation by proteasomes. May regulate molybdenum cofactor (MoCo) biosynthesis by inhibiting the activity of MPT synthase MoaE under aerobic conditions, providing a hierarchy of oxygen use prior to that of alternative electron acceptors such as DMSO. This is Small archaeal modifier protein 3 (samp3) from Haloferax volcanii (strain ATCC 29605 / DSM 3757 / JCM 8879 / NBRC 14742 / NCIMB 2012 / VKM B-1768 / DS2) (Halobacterium volcanii).